A 366-amino-acid chain; its full sequence is NAD(P)H-quinone oxidoreductase subunit 1, chloroplastic (366 aa).

8 helical membrane-spanning segments follow: residues 29 to 49 (WITA…LVIV), 97 to 117 (LLFS…YLVI), 130 to 150 (IGVF…FMAG), 166 to 186 (VAQA…ISLL), 202 to 222 (FGFW…FLIA), 254 to 274 (FGLF…FVTV), 307 to 327 (VIIG…ISIV), and 340 to 360 (LLNL…LLTA).

This sequence belongs to the complex I subunit 1 family. As to quaternary structure, NDH is composed of at least 16 different subunits, 5 of which are encoded in the nucleus.

The protein resides in the plastid. It localises to the chloroplast thylakoid membrane. The catalysed reaction is a plastoquinone + NADH + (n+1) H(+)(in) = a plastoquinol + NAD(+) + n H(+)(out). The enzyme catalyses a plastoquinone + NADPH + (n+1) H(+)(in) = a plastoquinol + NADP(+) + n H(+)(out). NDH shuttles electrons from NAD(P)H:plastoquinone, via FMN and iron-sulfur (Fe-S) centers, to quinones in the photosynthetic chain and possibly in a chloroplast respiratory chain. The immediate electron acceptor for the enzyme in this species is believed to be plastoquinone. Couples the redox reaction to proton translocation, and thus conserves the redox energy in a proton gradient. The protein is NAD(P)H-quinone oxidoreductase subunit 1, chloroplastic of Anthoceros angustus (Hornwort).